Consider the following 32-residue polypeptide: Photosystem I reaction center subunit XII (32 aa).

The chain crosses the membrane as a helical span at residues 10-27 (VVALISALVTGILALRLG).

It belongs to the PsaM family.

The protein localises to the plastid. Its subcellular location is the chloroplast thylakoid membrane. This Zygnema circumcarinatum (Green alga) protein is Photosystem I reaction center subunit XII.